A 206-amino-acid polypeptide reads, in one-letter code: Transcription factor MYB57 (206 aa).

A compositionally biased stretch (basic residues) spans 1-11; sequence METTMKKKGRV. The segment at 1–20 is disordered; the sequence is METTMKKKGRVKATITSQKE. HTH myb-type domains lie at 22–74 and 75–129; these read EGTV…LNYL and RPDV…QRHM. 2 consecutive DNA-binding regions (H-T-H motif) follow at residues 50 to 74 and 102 to 125; these read WNSVAKASGLKRTGKSCRLRWLNYL and WSKIAKHLPGRTDNEIKNFWRTKI. The segment at 138–162 is disordered; it reads NHQHHCSGNSQSSGMTTQGSSGKAI. The span at 144 to 159 shows a compositional bias: low complexity; that stretch reads SGNSQSSGMTTQGSSG.

Expressed specifically in flowers.

It localises to the nucleus. Transcription factor acting redundantly with MYB21 and MYB24 to control stamen filament elongation in the late developed flowers. Repressed at the transcript levels by DELLA proteins. This is Transcription factor MYB57 (MYB57) from Arabidopsis thaliana (Mouse-ear cress).